A 310-amino-acid chain; its full sequence is MASVTAAMVKDLREKTGAGMMDCKNALNETGGDIEAAIDWLRKKGLSKAAKKSGRIAAEGLVAVAVHETDGVVVEVNSETDFVARNEEFQALARTIALVAVEKGLTDVEALKGAHYPGGSTVAEAIANSVATIGENMTLRRVAAVNVAQGVVGQYVHNAVADGLGKIGVIVGLESTGDAVVLAPLARLIALHIAAASPLALEAADLDPAVVAREKAVLADKNAGKPPQVLEKIVESGLKTFYKEVCLVDQPSIHADHANKTIGQVVKEAEKAAGAPVKLKAFVRYALGEGIEKQESDFAAEVAAAASGQL.

The interval 80 to 83 (TDFV) is involved in Mg(2+) ion dislocation from EF-Tu.

It belongs to the EF-Ts family.

It is found in the cytoplasm. In terms of biological role, associates with the EF-Tu.GDP complex and induces the exchange of GDP to GTP. It remains bound to the aminoacyl-tRNA.EF-Tu.GTP complex up to the GTP hydrolysis stage on the ribosome. In Methylocella silvestris (strain DSM 15510 / CIP 108128 / LMG 27833 / NCIMB 13906 / BL2), this protein is Elongation factor Ts.